A 170-amino-acid polypeptide reads, in one-letter code: Peptide deformylase (170 aa).

Positions 91 and 133 each coordinate Fe cation. E134 is an active-site residue. Residue H137 coordinates Fe cation.

It belongs to the polypeptide deformylase family. Requires Fe(2+) as cofactor.

It catalyses the reaction N-terminal N-formyl-L-methionyl-[peptide] + H2O = N-terminal L-methionyl-[peptide] + formate. In terms of biological role, removes the formyl group from the N-terminal Met of newly synthesized proteins. Requires at least a dipeptide for an efficient rate of reaction. N-terminal L-methionine is a prerequisite for activity but the enzyme has broad specificity at other positions. This is Peptide deformylase from Actinobacillus pleuropneumoniae serotype 7 (strain AP76).